The following is a 438-amino-acid chain: MQTIYTKITDIKGNLITVEAEGARLGELAEIERVDGRSSYASVLRFDAKKVTLQVFGGTSGLSTGDRVIFLGRAMEVTYGESLIGRRLSGIGKPIDGEGECFGDPIAISTPTFNPVCRIVPRDMVRTNIPMIDMFNCLVKSQKIPIFSSSGENHNALLMRIAAQTDADIVIIGGMGLTFVDYSFFVEESKRLGFSDKCVMFIHKAVDAPVECVLIPDMALACAEKFAVDHNKNVLVLLTDMTAFADALKEIAITMDQIPANRGYPGSLYSDLALRYEKAVDIAKGGSITLISVTTMPGDDITHPVPDNTGFITEGQFYLKNNRIDPFGSLSRLKQLVIGKVTREDHGDLANSLIRLYADSRKAAERMAMGFKLSNWDKKLLAFAELFETRLMSLEVNIPLEEALDIGWKILAQSFHSEEVGIKEQLINKYWPKSCLHR.

Belongs to the ATPase alpha/beta chains family.

Functionally, produces ATP from ADP in the presence of a proton gradient across the membrane. The V-type beta chain is a regulatory subunit. In Chlamydia felis (strain Fe/C-56) (Chlamydophila felis), this protein is V-type ATP synthase beta chain.